A 123-amino-acid polypeptide reads, in one-letter code: MPTINQLIRKPREAQKARDKAPALQASPQKRGVCTRVYTTTPKKPNSALRKVAKVRLTNSYEVIGYIPGEGHNLQEHSVVMIRGGRVKDLPGVRYHILRGVLDTQGVKNRKQRRSKYGAKRPK.

The interval Met1 to Arg31 is disordered. A compositionally biased stretch (basic and acidic residues) spans Lys10 to Ala21. Asp89 is subject to 3-methylthioaspartic acid.

It belongs to the universal ribosomal protein uS12 family. As to quaternary structure, part of the 30S ribosomal subunit. Contacts proteins S8 and S17. May interact with IF1 in the 30S initiation complex.

Functionally, with S4 and S5 plays an important role in translational accuracy. Interacts with and stabilizes bases of the 16S rRNA that are involved in tRNA selection in the A site and with the mRNA backbone. Located at the interface of the 30S and 50S subunits, it traverses the body of the 30S subunit contacting proteins on the other side and probably holding the rRNA structure together. The combined cluster of proteins S8, S12 and S17 appears to hold together the shoulder and platform of the 30S subunit. The sequence is that of Small ribosomal subunit protein uS12 from Xanthobacter autotrophicus (strain ATCC BAA-1158 / Py2).